A 190-amino-acid chain; its full sequence is Peptide deformylase (190 aa).

2 residues coordinate Fe cation: Cys106 and His148. The active site involves Glu149. A Fe cation-binding site is contributed by His152.

This sequence belongs to the polypeptide deformylase family. Fe(2+) serves as cofactor.

It catalyses the reaction N-terminal N-formyl-L-methionyl-[peptide] + H2O = N-terminal L-methionyl-[peptide] + formate. Its function is as follows. Removes the formyl group from the N-terminal Met of newly synthesized proteins. Requires at least a dipeptide for an efficient rate of reaction. N-terminal L-methionine is a prerequisite for activity but the enzyme has broad specificity at other positions. In Methylacidiphilum infernorum (isolate V4) (Methylokorus infernorum (strain V4)), this protein is Peptide deformylase.